A 596-amino-acid chain; its full sequence is Nucleotidyltransferase lcsQ (596 aa).

A mitochondrion-targeting transit peptide spans 1-22; that stretch reads MLLRLSPSRMALKRKLDSFLRN. The interval 475–504 is disordered; it reads IVAHPGKPSQPADVPETPLSSGASKSKNLD.

This sequence belongs to the tRNA nucleotidyltransferase/poly(A) polymerase family.

Its subcellular location is the mitochondrion. In terms of biological role, nucleotidyltransferase; part of the gene cluster that mediates the biosynthesis of the lipopeptide antibiotics leucinostatins that show extensive biological activities, including antimalarial, antiviral, antibacterial, antifungal, and antitumor activities, as well as phytotoxic. The function of lcsQ within the leucinostatins biosynthesis has not been identified yet. In Purpureocillium lilacinum (Paecilomyces lilacinus), this protein is Nucleotidyltransferase lcsQ.